We begin with the raw amino-acid sequence, 87 residues long: U3-theraphotoxin-Hhn1l (87 aa).

The first 24 residues, methionine 1 to alanine 24, serve as a signal peptide directing secretion. Residues serine 25–arginine 52 constitute a propeptide that is removed on maturation. 3 disulfides stabilise this stretch: cysteine 54–cysteine 67, cysteine 61–cysteine 72, and cysteine 66–cysteine 79.

This sequence belongs to the neurotoxin 10 (Hwtx-1) family. 51 (Hntx-8) subfamily. Hntx-8 sub-subfamily. In terms of tissue distribution, expressed by the venom gland.

Its subcellular location is the secreted. Ion channel inhibitor. This Cyriopagopus hainanus (Chinese bird spider) protein is U3-theraphotoxin-Hhn1l.